The primary structure comprises 105 residues: PTS system lactose-specific EIIA component (105 aa).

The PTS EIIA type-3 domain occupies 4–102; it reads EEMTLLGFEI…IHHLIELYKR (99 aa). The active-site Tele-phosphohistidine intermediate is histidine 78. Histidine 78 carries the phosphohistidine; by HPr modification. Aspartate 81 contacts Mg(2+).

As to quaternary structure, homotrimer. The cofactor is Mg(2+).

Its subcellular location is the cytoplasm. Functionally, the phosphoenolpyruvate-dependent sugar phosphotransferase system (sugar PTS), a major carbohydrate active transport system, catalyzes the phosphorylation of incoming sugar substrates concomitantly with their translocation across the cell membrane. The enzyme II LacEF PTS system is involved in lactose transport. This chain is PTS system lactose-specific EIIA component, found in Lactococcus lactis subsp. lactis (Streptococcus lactis).